An 85-amino-acid chain; its full sequence is Homeobox protein liguleless 3 (85 aa).

Residues 1–21 (ELKEMLLKKYSGCLSRLRSEF) form the ELK domain. Residues 22–85 (LKKRKKGKLP…NQRKRHWKPS (64 aa)) constitute a DNA-binding region (homeobox; TALE-type).

This sequence belongs to the TALE/KNOX homeobox family.

The protein localises to the nucleus. Probably binds to the DNA sequence 5'-TGAC-3'. This is Homeobox protein liguleless 3 (LG3) from Zea mays (Maize).